The following is a 2083-amino-acid chain: Centriole proteome protein 16 (2083 aa).

Residues 205–333 are disordered; sequence DAPTMDFMPP…PAVPPPLSPS (129 aa). Residues 227 to 245 show a composition bias toward low complexity; it reads TAETADTAGAAGRKSLSGA. Gly residues predominate over residues 246 to 258; sequence SAGGAGPAKGGAK. 2 stretches are compositionally biased toward low complexity: residues 259–274 and 283–292; these read AGAA…SAGA and GSTAGAATPG. Over residues 302–315 the composition is skewed to acidic residues; the sequence is GEEDFEDDLSEDLD. Over residues 319–331 the composition is skewed to pro residues; it reads PLPPSPAVPPPLS. WD repeat units lie at residues 482–523, 526–569, 579–620, 689–726, 728–767, 770–809, 812–853, 856–895, 990–1029, and 1041–1079; these read GHTA…CLAI, AHAS…AAGG, ATEY…GTSV, LHAA…YLLE, EHEG…YTTL, SHCG…QLYE, APGE…LLQE, QHRA…APAQ, VSPL…ALRG, and GHPS…MQQE. Disordered regions lie at residues 1113–1141 and 1225–1276; these read HTQA…VASA and ALVV…PPPP. The span at 1263–1276 shows a compositional bias: pro residues; it reads VPLPPSPQPLPPPP. 7 WD repeats span residues 1326 to 1365, 1403 to 1444, 1448 to 1486, 1497 to 1539, 1651 to 1691, 1736 to 1781, and 1785 to 1824; these read GHNR…RAAQ, YHPL…LVAA, EQSP…LEQR, RDPR…QPPQ, GQAA…AEPA, DPLD…QLSW, and RHPA…LVSY. The tract at residues 1713-1743 is disordered; that stretch reads APAHTLRHPPSAAPSSAASSSPLDPLDPLPA. The segment covering 1720-1743 has biased composition (low complexity); the sequence is HPPSAAPSSAASSSPLDPLDPLPA. Residues 1832 to 1870 form a disordered region; the sequence is GPTPHSPGGTGRRSPRGAASPPPAPPRPGTGPLQAMAVS. The segment covering 1851–1860 has biased composition (pro residues); sequence SPPPAPPRPG. The stretch at 2035 to 2073 is one WD 18 repeat; the sequence is GHAGAVAAASYTGDGGHAVTASGSVLMVWDAAQLLKGVT.

The protein belongs to the WD repeat WDR90/POC16 family.

Its subcellular location is the cytoplasm. The protein resides in the cytoskeleton. It localises to the microtubule organizing center. The protein localises to the centrosome. It is found in the centriole. Functionally, required for flagellum assembly and/or maintenance. This Chlamydomonas reinhardtii (Chlamydomonas smithii) protein is Centriole proteome protein 16.